We begin with the raw amino-acid sequence, 200 residues long: Probable GTP-binding protein EngB (200 aa).

The region spanning 24–199 (EGAEVAFAGR…RGVIGGWLGL (176 aa)) is the EngB-type G domain. GTP-binding positions include 32 to 39 (GRSNAGKS), 59 to 63 (GRTQQ), 77 to 80 (DLPG), 144 to 147 (TKAD), and 178 to 180 (FSG). Mg(2+) contacts are provided by Ser39 and Thr61.

It belongs to the TRAFAC class TrmE-Era-EngA-EngB-Septin-like GTPase superfamily. EngB GTPase family. It depends on Mg(2+) as a cofactor.

Necessary for normal cell division and for the maintenance of normal septation. This is Probable GTP-binding protein EngB from Stenotrophomonas maltophilia (strain K279a).